The following is a 215-amino-acid chain: MEVNNETMQKSKFGRICVFCGSSQGKKSSYQDAAVDLGNELVLRNIDLVYGGGSIGLMGLVSQAVHDGGRHVIGVIPKTLMPRELTGETVGEVRAVADMHQRKAEMARHSDAFIALPGGYGTLEELLEVITWAQLGIHDKPVGLLNVDGYYNSLLSFIDKAVEEGFISTNARQIIISAPTAKELVKKLEEYSPCHESVATKLCWEIERIDYSSED.

Residues Glu-84, Arg-102–Lys-103, Gly-119–Glu-125, and Thr-131 contribute to the substrate site.

It belongs to the LOG family. Expressed in roots and shoots. Detected in root procambium, lateral root primordia, vascular tissues of cotyledons, leaves and stems, shoot apical meristem, axillary buds, young inflorescences, fruit abscission zones and basal part of ovules.

It localises to the cytoplasm. It is found in the nucleus. It catalyses the reaction N(6)-(dimethylallyl)adenosine 5'-phosphate + H2O = N(6)-dimethylallyladenine + D-ribose 5-phosphate. It carries out the reaction 9-ribosyl-trans-zeatin 5'-phosphate + H2O = trans-zeatin + D-ribose 5-phosphate. Cytokinin-activating enzyme working in the direct activation pathway. Phosphoribohydrolase that converts inactive cytokinin nucleotides to the biologically active free-base forms. The protein is Cytokinin riboside 5'-monophosphate phosphoribohydrolase LOG4 (LOG4) of Arabidopsis thaliana (Mouse-ear cress).